A 764-amino-acid polypeptide reads, in one-letter code: Protein Lines homolog 1 (764 aa).

Disordered stretches follow at residues 615-668 and 682-702; these read SQSQ…TSLC and WEEQKEHSLEPLLSAESSSPF. The span at 645–654 shows a compositional bias: acidic residues; sequence DSSEASEEET. Ser-650 carries the phosphoserine modification. The segment covering 658 to 668 has biased composition (polar residues); the sequence is HLANSKQTSLC. The segment covering 691 to 702 has biased composition (low complexity); the sequence is EPLLSAESSSPF.

This sequence belongs to the protein lines family.

This Mus musculus (Mouse) protein is Protein Lines homolog 1.